A 207-amino-acid polypeptide reads, in one-letter code: Uracil phosphoribosyltransferase (207 aa).

Residues R77, R102, and 129–137 each bind 5-phospho-alpha-D-ribose 1-diphosphate; that span reads DPMLATGGS. Residues I192 and 197-199 each bind uracil; that span reads GDA. Residue D198 participates in 5-phospho-alpha-D-ribose 1-diphosphate binding.

The protein belongs to the UPRTase family. Mg(2+) serves as cofactor.

It catalyses the reaction UMP + diphosphate = 5-phospho-alpha-D-ribose 1-diphosphate + uracil. It functions in the pathway pyrimidine metabolism; UMP biosynthesis via salvage pathway; UMP from uracil: step 1/1. With respect to regulation, allosterically activated by GTP. Its function is as follows. Catalyzes the conversion of uracil and 5-phospho-alpha-D-ribose 1-diphosphate (PRPP) to UMP and diphosphate. In Mycoplasma mycoides subsp. mycoides SC (strain CCUG 32753 / NCTC 10114 / PG1), this protein is Uracil phosphoribosyltransferase.